A 926-amino-acid polypeptide reads, in one-letter code: Centrosomal protein of 104 kDa (926 aa).

The stretch at 212–279 forms a coiled coil; that stretch reads EVAQIIRRLD…DLAKEKKQQM (68 aa). Positions 345–419 are disordered; the sequence is LQEKPSASSP…RGVAGEPEPL (75 aa). Residues 398 to 409 are compositionally biased toward basic and acidic residues; sequence AEVKEADSDVRR. 2 HEAT repeats span residues 522–558 and 603–639; these read THCVERAFPLLLARAGDSSARLRVMALNFIQEMALFK and GFTVDNVMKFAVSALEHRVYEVRETAVRIILDMYRQH. A coiled-coil region spans residues 678 to 730; the sequence is EAEVRAQKRVATKEAEKQKKEEMKALQGQSGELRETQAGVQEKESEAVKLRNQ. 2 stretches are compositionally biased toward basic and acidic residues: residues 690-701 and 718-729; these read KEAEKQKKEEMK and QEKESEAVKLRN. Disordered stretches follow at residues 690–741 and 885–926; these read KEAE…VLPD and APQQ…YMRR. Positions 889 to 903 are enriched in low complexity; it reads GKGPAAAKSSTSAPK. The segment covering 916-926 has biased composition (polar residues); that stretch reads SKSSSRTYMRR.

As to quaternary structure, interacts with CCP110 and CEP97. Interacts with ARMC9, TOGARAM1, CCDC66 and CSPP1.

Its subcellular location is the cell projection. It localises to the cilium. The protein resides in the cytoplasm. It is found in the cytoskeleton. The protein localises to the microtubule organizing center. Its subcellular location is the centrosome. It localises to the centriole. The protein resides in the spindle pole. Required for ciliogenesis and for structural integrity at the ciliary tip. This is Centrosomal protein of 104 kDa (Cep104) from Mus musculus (Mouse).